A 128-amino-acid chain; its full sequence is Large ribosomal subunit protein bL12 (128 aa).

It belongs to the bacterial ribosomal protein bL12 family. Homodimer. Part of the ribosomal stalk of the 50S ribosomal subunit. Forms a multimeric L10(L12)X complex, where L10 forms an elongated spine to which 2 to 4 L12 dimers bind in a sequential fashion. Binds GTP-bound translation factors.

In terms of biological role, forms part of the ribosomal stalk which helps the ribosome interact with GTP-bound translation factors. Is thus essential for accurate translation. The sequence is that of Large ribosomal subunit protein bL12 from Desulfosudis oleivorans (strain DSM 6200 / JCM 39069 / Hxd3) (Desulfococcus oleovorans).